A 63-amino-acid polypeptide reads, in one-letter code: Bowman-Birk type proteinase inhibitor B-II (63 aa).

7 cysteine pairs are disulfide-bonded: cysteine 5–cysteine 62, cysteine 6–cysteine 23, cysteine 9–cysteine 57, cysteine 11–cysteine 21, cysteine 30–cysteine 37, cysteine 34–cysteine 49, and cysteine 39–cysteine 47.

The protein belongs to the Bowman-Birk serine protease inhibitor family.

The polypeptide is Bowman-Birk type proteinase inhibitor B-II (Arachis hypogaea (Peanut)).